A 482-amino-acid polypeptide reads, in one-letter code: Cilia- and flagella-associated protein 53 (482 aa).

3 coiled-coil regions span residues 9–40 (DARIQKMRELEERLANLKADRKVEQKMVAVAE), 67–124 (ADLN…QALA), and 152–413 (IEER…AKDA). Residues 462 to 482 (VNQTLSSTDPPVWHGRRKFDW) are disordered.

The protein belongs to the CFAP53 family.

Its subcellular location is the cell projection. The protein localises to the cilium. The protein resides in the flagellum. May play a role in filopodium movement. This Chlamydomonas reinhardtii (Chlamydomonas smithii) protein is Cilia- and flagella-associated protein 53.